Reading from the N-terminus, the 507-residue chain is Glycerol kinase (507 aa).

Thr-14 serves as a coordination point for ADP. Residues Thr-14, Thr-15, and Ser-16 each contribute to the ATP site. Residue Thr-14 participates in sn-glycerol 3-phosphate binding. An ADP-binding site is contributed by Arg-18. Residues Arg-84, Glu-85, Tyr-136, and Asp-246 each contribute to the sn-glycerol 3-phosphate site. Glycerol contacts are provided by Arg-84, Glu-85, Tyr-136, Asp-246, and Gln-247. The ADP site is built by Thr-268 and Gly-311. ATP is bound by residues Thr-268, Gly-311, Gln-315, and Gly-412. ADP contacts are provided by Gly-412 and Asn-416.

The protein belongs to the FGGY kinase family.

It carries out the reaction glycerol + ATP = sn-glycerol 3-phosphate + ADP + H(+). Its pathway is polyol metabolism; glycerol degradation via glycerol kinase pathway; sn-glycerol 3-phosphate from glycerol: step 1/1. Its activity is regulated as follows. Inhibited by fructose 1,6-bisphosphate (FBP). Its function is as follows. Key enzyme in the regulation of glycerol uptake and metabolism. Catalyzes the phosphorylation of glycerol to yield sn-glycerol 3-phosphate. This Vibrio atlanticus (strain LGP32) (Vibrio splendidus (strain Mel32)) protein is Glycerol kinase.